Consider the following 361-residue polypeptide: [LysW]-lysine hydrolase (361 aa).

A Zn(2+)-binding site is contributed by His-67. Asp-69 is an active-site residue. Asp-91 is a binding site for Zn(2+). Catalysis depends on Glu-124, which acts as the Proton acceptor. The Zn(2+) site is built by Glu-125, Glu-148, and His-326.

Belongs to the peptidase M20A family. LysK subfamily. Zn(2+) serves as cofactor. It depends on Co(2+) as a cofactor.

The protein localises to the cytoplasm. The enzyme catalyses [amino-group carrier protein]-C-terminal-gamma-(L-lysyl)-L-glutamate + H2O = [amino-group carrier protein]-C-terminal-L-glutamate + L-lysine. It functions in the pathway amino-acid biosynthesis; L-lysine biosynthesis via AAA pathway; L-lysine from L-alpha-aminoadipate (Thermus route): step 5/5. Its function is as follows. Catalyzes the release of L-lysine from [LysW]-gamma-L-lysine. The sequence is that of [LysW]-lysine hydrolase from Thermus thermophilus (strain ATCC 27634 / DSM 579 / HB8).